A 133-amino-acid polypeptide reads, in one-letter code: Alpha-amylase inhibitor/endochitinase (133 aa).

Glu30 functions as the Proton donor in the catalytic mechanism.

The protein belongs to the glycosyl hydrolase 19 family. Chitinase class I subfamily.

The enzyme catalyses Random endo-hydrolysis of N-acetyl-beta-D-glucosaminide (1-&gt;4)-beta-linkages in chitin and chitodextrins.. Its function is as follows. This protein functions both as an alpha-amylase inhibitor and as a chitinase. In Coix lacryma-jobi (Job's tears), this protein is Alpha-amylase inhibitor/endochitinase.